The following is a 106-amino-acid chain: Large ribosomal subunit protein P1A (106 aa).

An N-acetylserine modification is found at Ser-2. The segment at 73 to 106 is disordered; the sequence is GGVAGGEAGEAEAEKEEEEAKEESDDDMGFGLFD. Residues 81 to 100 are compositionally biased toward acidic residues; that stretch reads GEAEAEKEEEEAKEESDDDM. Ser-96 bears the Phosphoserine mark.

The protein belongs to the eukaryotic ribosomal protein P1/P2 family. As to quaternary structure, component of the large ribosomal subunit (LSU). Mature yeast ribosomes consist of a small (40S) and a large (60S) subunit. The 40S small subunit contains 1 molecule of ribosomal RNA (18S rRNA) and 33 different proteins (encoded by 57 genes). The large 60S subunit contains 3 rRNA molecules (25S, 5.8S and 5S rRNA) and 46 different proteins (encoded by 81 genes). The 5 acidic ribosomal P-proteins form the stalk structure of the 60S subunit. They are organized as a pentameric complex in which uL10/P0 interacts with 2 heterodimers, P1A-P2B and P1B-P2A. N-terminally acetylated by acetyltransferase NatA.

The protein resides in the cytoplasm. Its function is as follows. Component of the ribosome, a large ribonucleoprotein complex responsible for the synthesis of proteins in the cell. The small ribosomal subunit (SSU) binds messenger RNAs (mRNAs) and translates the encoded message by selecting cognate aminoacyl-transfer RNA (tRNA) molecules. The large subunit (LSU) contains the ribosomal catalytic site termed the peptidyl transferase center (PTC), which catalyzes the formation of peptide bonds, thereby polymerizing the amino acids delivered by tRNAs into a polypeptide chain. The nascent polypeptides leave the ribosome through a tunnel in the LSU and interact with protein factors that function in enzymatic processing, targeting, and the membrane insertion of nascent chains at the exit of the ribosomal tunnel. The chain is Large ribosomal subunit protein P1A from Saccharomyces cerevisiae (strain ATCC 204508 / S288c) (Baker's yeast).